We begin with the raw amino-acid sequence, 133 residues long: Small ribosomal subunit protein eS24y (133 aa).

Residues 104–133 are disordered; that stretch reads KSRKQIKERKNRAKKIRGVKKTKAGDTKKK. Over residues 109-125 the composition is skewed to basic residues; that stretch reads IKERKNRAKKIRGVKKT.

This sequence belongs to the eukaryotic ribosomal protein eS24 family.

The protein is Small ribosomal subunit protein eS24y (RPS24B) of Arabidopsis thaliana (Mouse-ear cress).